The chain runs to 463 residues: Fumarate hydratase class II (463 aa).

Substrate contacts are provided by residues 95-97 (SGT), 126-129 (HPND), 136-138 (SSN), and Thr184. Residue His185 is the Proton donor/acceptor of the active site. Residue Ser315 is part of the active site. Substrate-binding positions include Ser316 and 321–323 (KIN).

Belongs to the class-II fumarase/aspartase family. Fumarase subfamily. Homotetramer.

It is found in the cytoplasm. The enzyme catalyses (S)-malate = fumarate + H2O. It participates in carbohydrate metabolism; tricarboxylic acid cycle; (S)-malate from fumarate: step 1/1. In terms of biological role, involved in the TCA cycle. Catalyzes the stereospecific interconversion of fumarate to L-malate. The protein is Fumarate hydratase class II of Chlamydia muridarum (strain MoPn / Nigg).